The chain runs to 671 residues: DNA ligase (671 aa).

NAD(+)-binding positions include 32–36 (DAEYD), 81–82 (SL), and Glu113. The active-site N6-AMP-lysine intermediate is Lys115. Positions 136, 173, 290, and 314 each coordinate NAD(+). The Zn(2+) site is built by Cys408, Cys411, Cys426, and Cys432. In terms of domain architecture, BRCT spans 593–671 (EIDSPFAGKT…EAEMMRLLGE (79 aa)).

This sequence belongs to the NAD-dependent DNA ligase family. LigA subfamily. The cofactor is Mg(2+). Mn(2+) is required as a cofactor.

It carries out the reaction NAD(+) + (deoxyribonucleotide)n-3'-hydroxyl + 5'-phospho-(deoxyribonucleotide)m = (deoxyribonucleotide)n+m + AMP + beta-nicotinamide D-nucleotide.. In terms of biological role, DNA ligase that catalyzes the formation of phosphodiester linkages between 5'-phosphoryl and 3'-hydroxyl groups in double-stranded DNA using NAD as a coenzyme and as the energy source for the reaction. It is essential for DNA replication and repair of damaged DNA. The chain is DNA ligase from Klebsiella pneumoniae (strain 342).